The primary structure comprises 932 residues: Potassium voltage-gated channel subfamily KQT member 5 (932 aa).

At 1-125 (MPRHHAGGEE…YNVLERPRGW (125 aa)) the chain is on the cytoplasmic side. Serine 88 carries the phosphoserine modification. The chain crosses the membrane as a helical span at residues 126-146 (AFIYHAFVFLLVFGCLILSVF). Topologically, residues 147 to 156 (STIPEHTKLA) are extracellular. A helical membrane pass occupies residues 157 to 177 (SSCLLILEFVMIVVFGLEFII). Residues 178–200 (RIWSAGCCCRYRGWQGRLRFARK) are Cytoplasmic-facing. Residues 201 to 221 (PFCVIDTIVLIASIAVVSAKT) traverse the membrane as a helical segment. The Extracellular portion of the chain corresponds to 222 to 229 (QGNIFATS). The helical; Voltage-sensor transmembrane segment at 230-252 (ALRSLRFLQILRMVRMDRRGGTW) threads the bilayer. A 1,2-diacyl-sn-glycero-3-phospho-(1D-myo-inositol-4,5-bisphosphate) is bound by residues arginine 248 and lysine 264. Residues 253–266 (KLLGSVVYAHSKEL) are Cytoplasmic-facing. Residues 267-287 (ITAWYIGFLVLIFSSFLVYLV) form a helical membrane-spanning segment. At 288 to 298 (EKDANKEFSTY) the chain is on the extracellular side. The segment at residues 299–319 (ADALWWGTITLTTIGYGDKTP) is an intramembrane region (pore-forming). Residues 320-325 (LTWLGR) are Extracellular-facing. Residues 326 to 346 (LLSAGFALLGISFFALPAGIL) traverse the membrane as a helical segment. Residues 347–932 (GSGFALKVQE…ALSLPHVKLK (586 aa)) are Cytoplasmic-facing. Residue lysine 361 participates in a 1,2-diacyl-sn-glycero-3-phospho-(1D-myo-inositol-4,5-bisphosphate) binding. Positions 370-378 (AANLIQCVW) are interaction with CALM. Positions 404–465 (SPTKKEQGEA…GSPTKVQKSW (62 aa)) are disordered. Positions 431-440 (RGQSIKSRQA) are enriched in polar residues. The residue at position 447 (serine 447) is a Phosphoserine. The segment at 521 to 528 (VIRAIRIM) is interaction with CALM. Positions 655–678 (SDYQSPVDSKDLSGSAQNSGCLSR) are disordered. Serine 831 is subject to Phosphoserine. Over residues 876–885 (VGPEETETDT) the composition is skewed to acidic residues. The segment at 876–919 (VGPEETETDTFDAAPQPAREAAFASDSLRTGRSRSSQSICKAGE) is disordered. Residues 888-899 (AAPQPAREAAFA) show a composition bias toward low complexity. Polar residues predominate over residues 902–914 (SLRTGRSRSSQSI).

Belongs to the potassium channel family. KQT (TC 1.A.1.15) subfamily. Kv7.5/KCNQ5 sub-subfamily. As to quaternary structure, homotetramer; forms a functional homotetrameric channel resulting in the expression of a small M-current. Heterotetramer with KCNQ3; forms heterotetrameric M-channel responsible for the native M-current. Heterotetramer with KCNQ1; forms a functional voltage-gated potassium channel. Interacts (via C-terminus) with calmodulin/CALM1; forms a heterooctameric structure (with 4:4 KCNQ1:CALM stoichiometry); the interaction is calcium-independent, constitutive and participates in the channel function. In terms of tissue distribution, strongly expressed in brain and skeletal muscle. In brain, expressed in cerebral cortex, occipital pole, frontal lobe and temporal lobe. Lower levels in hippocampus and putamen. Low to undetectable levels in medulla, cerebellum and thalamus.

It localises to the cell membrane. It catalyses the reaction K(+)(in) = K(+)(out). With respect to regulation, phosphatidylinositol-4,5-bisphosphate (PIP2) is essential to activate KCNQ5 channel by inducing the coupling of the voltage-sensing domain (VSD) and the pore-forming domain (PD). Calcium suppresses KCNQ5 channel current through calcium-bound CALM C-terminus. Therefore CALM acts as calcium sensor that controls channel activity. Activated by niflumic acid and the anticonvulsant retigabine. Inhibited by barium, linopirdine, XE991 and tetraethylammonium (as homomer). Insensitive to tetraethylammonium in KCNQ3-KCNQ5 heteromers. Pore-forming subunit of the voltage-gated potassium (Kv) channel broadly expressed in brain and involved in the regulation of neuronal excitability. Associates with KCNQ3/Kv7.3 pore-forming subunit to form a potassium channel which contributes to M-type current, a slowly activating and deactivating potassium conductance which plays a critical role in determining the subthreshold electrical excitability of neurons. Contributes, with other potassium channels, to the molecular diversity of a heterogeneous population of M-channels, varying in kinetic and pharmacological properties, which underlie this physiologically important current. Also forms a functional channel with KCNQ1/Kv7.1 subunit that may contribute to vasoconstriction and hypertension. Channel may be selectively permeable in vitro to other cations besides potassium, in decreasing order of affinity K(+) = Rb(+) &gt; Cs(+) &gt; Na(+). Similar to the native M-channel, KCNQ3-KCNQ5 potassium channel is suppressed by activation of the muscarinic acetylcholine receptor CHRM1. This Homo sapiens (Human) protein is Potassium voltage-gated channel subfamily KQT member 5.